The primary structure comprises 227 residues: Flagellar L-ring protein (227 aa).

Residues 1–16 (MRNIILFAAGTLLLSG) form the signal peptide. Cysteine 17 carries N-palmitoyl cysteine lipidation. Cysteine 17 carries S-diacylglycerol cysteine lipidation.

It belongs to the FlgH family. As to quaternary structure, the basal body constitutes a major portion of the flagellar organelle and consists of four rings (L,P,S, and M) mounted on a central rod.

It is found in the cell outer membrane. The protein localises to the bacterial flagellum basal body. Its function is as follows. Assembles around the rod to form the L-ring and probably protects the motor/basal body from shearing forces during rotation. The sequence is that of Flagellar L-ring protein from Pseudoalteromonas translucida (strain TAC 125).